Here is a 255-residue protein sequence, read N- to C-terminus: Electron transfer flavoprotein subunit beta (255 aa).

Position 2 is an N-acetylalanine (alanine 2). Residues alanine 9, 39 to 42 (NPFC), cysteine 66, and 123 to 134 (GKQAIDDDCNQT) contribute to the AMP site. The tract at residues 183–205 (ADLRLNEPRYATLPNIMKAKKKK) is recognition loop. N6,N6,N6-trimethyllysine; by ETFBKMT; alternate is present on lysine 200. Lysine 200 carries the N6-acetyllysine; alternate modification. Residue lysine 200 is modified to N6-methyllysine; alternate. Lysine 203 is modified (N6,N6,N6-trimethyllysine; by ETFBKMT). At lysine 210 the chain carries N6-acetyllysine; alternate. N6-succinyllysine; alternate is present on lysine 210. Phosphoserine is present on residues serine 223 and serine 226. Lysine 238 carries the post-translational modification N6-acetyllysine. Lysine 248 carries the N6-acetyllysine; alternate modification. Lysine 248 carries the post-translational modification N6-succinyllysine; alternate.

It belongs to the ETF beta-subunit/FixA family. Heterodimer composed of ETFA and ETFB. Identified in a complex that contains ETFA, ETFB and ETFRF1. Interacts with ACADM. In terms of processing, methylated. Trimethylation at Lys-200 and Lys-203 may negatively regulate the activity in electron transfer from acyl-CoA dehydrogenases.

It localises to the mitochondrion matrix. Heterodimeric electron transfer flavoprotein that accepts electrons from several mitochondrial dehydrogenases, including acyl-CoA dehydrogenases, glutaryl-CoA and sarcosine dehydrogenase. It transfers the electrons to the main mitochondrial respiratory chain via ETF-ubiquinone oxidoreductase. Required for normal mitochondrial fatty acid oxidation and normal amino acid metabolism. ETFB binds an AMP molecule that probably has a purely structural role. The polypeptide is Electron transfer flavoprotein subunit beta (Sus scrofa (Pig)).